A 442-amino-acid chain; its full sequence is Proline--tRNA ligase (442 aa).

This sequence belongs to the class-II aminoacyl-tRNA synthetase family. ProS type 2 subfamily. Homodimer.

It is found in the cytoplasm. The catalysed reaction is tRNA(Pro) + L-proline + ATP = L-prolyl-tRNA(Pro) + AMP + diphosphate. Functionally, catalyzes the attachment of proline to tRNA(Pro) in a two-step reaction: proline is first activated by ATP to form Pro-AMP and then transferred to the acceptor end of tRNA(Pro). The chain is Proline--tRNA ligase from Brucella melitensis biotype 2 (strain ATCC 23457).